Reading from the N-terminus, the 791-residue chain is MAATTANPEMTSDVPSLGPTIASGNPGPGIQGGGAVVQRAIKRRSGLDFDDEVEVNTKFLRCDDDQMCNDKERFARSDDEQSSADKERLARENHSEIERRRRNKMTAYITELSDMVPTCSALARKPDKLTILRMAVSHMKSLRGTGNTSTDGSYKPSFLTDQELKHLILEAADGFLFIVSCETGRVVYVSDSVTPVLNQPQSEWFGSTLYDQVHPDDVDKLREQLSTSENALTGRVLDLKTGTVKKEGQQSSMRMCMGSRRSFICRMRCGTSSVDPVSMNRLSFLRNRCRNGLGSVKEGEPHFVVVHCTGYIKAWPPAGVSLPDDDPEAGQGSKFCLVAIGRLQVTSSPNCTDMSNICQPTEFISRHNIEGIFTFVDHRCVATVGYQPQELLGKNIVEFCHPEDQQLLRDSFQQVVKLKGQVLSVMFRFRSKTREWLWMRTSSFTFQNPYSDEIEYIICTNTNVKNSSQEPRPTLSNTIPRSQLGPTANLSLEMGTGQLPSRQQQQQHTELDMVPGRDGLASYNHSQVSVQPVASAGSEHSKPLEKSEGLFAQDRDPRFPEIYPSITADQSKGISSSTVPATQQLFSQGSSFPPNPRPAENFRNSGLTPPVTIVQPSSSAGQILAQISRHSNPAQGSAPTWTSSSRPGFAAQQVPTQATAKTRSSQFGVNNFQTSSSFSAMSLPGAPTASSGTAAYPALPNRGSNFPPETGQTTGQFQARTAEGVGVWPQWQGQQPHHRSSSSEQHVQQTQAQAPSQPEVFQEMLSMLGDQSNTYNNEEFPDLTMFPPFSE.

Over residues 1 to 14 (MAATTANPEMTSDV) the composition is skewed to polar residues. The disordered stretch occupies residues 1–33 (MAATTANPEMTSDVPSLGPTIASGNPGPGIQGG). An N-acetylalanine modification is found at A2. A Glycyl lysine isopeptide (Lys-Gly) (interchain with G-Cter in SUMO2) cross-link involves residue K58. Residues 73 to 97 (RFARSDDEQSSADKERLARENHSEI) are disordered. Position 77 is a phosphoserine (S77). The tract at residues 88–128 (RLARENHSEIERRRRNKMTAYITELSDMVPTCSALARKPDK) is DNA-binding. The 54-residue stretch at 89-142 (LARENHSEIERRRRNKMTAYITELSDMVPTCSALARKPDKLTILRMAVSHMKSL) folds into the bHLH domain. The interval 112 to 168 (LSDMVPTCSALARKPDKLTILRMAVSHMKSLRGTGNTSTDGSYKPSFLTDQELKHLI) is required for heterodimer formation with HIF1A. The tract at residues 112-264 (LSDMVPTCSA…MCMGSRRSFI (153 aa)) is required for heterodimer formation with EPAS1. PAS domains lie at 161–235 (DQEL…LTGR) and 349–419 (PNCT…VKLK). The interval 167–171 (LILEA) is mediates the transcription activity and dimerization of the AHR:ARNT complex. The PAC domain maps to 424–467 (SVMFRFRSKTREWLWMRTSSFTFQNPYSDEIEYIICTNTNVKNS). Composition is skewed to polar residues over residues 465–490 (KNSSQEPRPTLSNTIPRSQLGPTANL) and 498–508 (QLPSRQQQQQH). 5 disordered regions span residues 465-508 (KNSS…QQQH), 530-554 (VQPVASAGSEHSKPLEKSEGLFAQD), 631-667 (SNPAQGSAPTWTSSSRPGFAAQQVPTQATAKTRSSQF), 682-715 (SLPGAPTASSGTAAYPALPNRGSNFPPETGQTTG), and 730-791 (QWQG…PFSE). The span at 539–554 (EHSKPLEKSEGLFAQD) shows a compositional bias: basic and acidic residues. Polar residues-rich tracts occupy residues 631–646 (SNPAQGSAPTWTSSSR) and 653–667 (QVPTQATAKTRSSQF). The segment covering 742 to 756 (SSEQHVQQTQAQAPS) has biased composition (polar residues).

As to quaternary structure, monomer. Homodimer only upon binding to a DNA. Efficient DNA binding requires dimerization with another bHLH protein. Interacts with TACC3. Interacts with HIF1A, EPAS1, NPAS1 and NPAS3; forms a heterodimer that binds core DNA sequence 5'-TACGTG-3' within the hypoxia response element (HRE) of target gene promoters. Forms a heterodimer with AHRR, as well as with other bHLH proteins. Interacts with NOCA7. Interacts with AHR; the heterodimer ARNT:AHR binds to core DNA sequence 5'-TGCGTG-3' within the dioxin response element (DRE) of target gene promoters and activates their transcription. Interacts with SIM1 and NPAS4. As to expression, ubiquitous.

The protein localises to the nucleus. In terms of biological role, required for activity of the Ah (dioxin) receptor. This protein is required for the ligand-binding subunit to translocate from the cytosol to the nucleus after ligand binding. The complex then initiates transcription of genes involved in the activation of PAH procarcinogens. The heterodimer binds to core DNA sequence 5'-TACGTG-3' within the hypoxia response element (HRE) of target gene promoters and functions as a transcriptional regulator of the adaptive response to hypoxia. The heterodimer ARNT:AHR binds to core DNA sequence 5'-TGCGTG-3' within the dioxin response element (DRE) of target gene promoters and activates their transcription. Its function is as follows. Required for activity of the AHR. Upon ligand binding, AHR translocates into the nucleus, where it heterodimerizes with ARNT and induces transcription by binding to xenobiotic response elements (XRE). Not required for the ligand-binding subunit to translocate from the cytosol to the nucleus after ligand binding. The complex initiates transcription of genes involved in the regulation of a variety of biological processes, including angiogenesis, hematopoiesis, drug and lipid metabolism, cell motility and immune modulation. The heterodimer binds to core DNA sequence 5'-TACGTG-3' within the hypoxia response element (HRE) of target gene promoters and functions as a transcriptional regulator of the adaptive response to hypoxia. The heterodimer ARNT:AHR binds to core DNA sequence 5'-TGCGTG-3' within the dioxin response element (DRE) of target gene promoters and activates their transcription. This is Aryl hydrocarbon receptor nuclear translocator (Arnt) from Mus musculus (Mouse).